A 286-amino-acid chain; its full sequence is ATP synthase gamma chain (286 aa).

Belongs to the ATPase gamma chain family. F-type ATPases have 2 components, CF(1) - the catalytic core - and CF(0) - the membrane proton channel. CF(1) has five subunits: alpha(3), beta(3), gamma(1), delta(1), epsilon(1). CF(0) has three main subunits: a, b and c.

The protein localises to the cell inner membrane. Functionally, produces ATP from ADP in the presence of a proton gradient across the membrane. The gamma chain is believed to be important in regulating ATPase activity and the flow of protons through the CF(0) complex. This chain is ATP synthase gamma chain, found in Pseudomonas aeruginosa (strain UCBPP-PA14).